Reading from the N-terminus, the 527-residue chain is Glucose transporter 1B/1C/1D/1F/2B (527 aa).

The segment at 1 to 22 is disordered; sequence MTERRDNVSHAPDAIEGPNDGA. The Cytoplasmic portion of the chain corresponds to 1-43; it reads MTERRDNVSHAPDAIEGPNDGAHAEDTSPGFFSLENLGVAQVQ. The chain crosses the membrane as a helical span at residues 44-64; it reads VVGGTLNGYVIGYVAVYLLLY. The Extracellular portion of the chain corresponds to 65-118; it reads LTATECKFTTEGACGGRKIYGCKWSGTTCKFENPKCSEGSDPSDSCKNEVAYTS. Residues 119-139 form a helical membrane-spanning segment; the sequence is VYSGIFACAMIVGSMVGSIIA. The Cytoplasmic portion of the chain corresponds to 140-151; sequence GKCITTFGLKKS. A helical transmembrane segment spans residues 152 to 172; that stretch reads FIIVSITCTIACVVVQVAIEY. Topologically, residues 173–175 are extracellular; that stretch reads NNY. The chain crosses the membrane as a helical span at residues 176-196; the sequence is YALCTGRVLIGLGVGILCSVF. Over 197-213 the chain is Cytoplasmic; the sequence is PMYVNENAHPKLCKMDG. The helical transmembrane segment at 214 to 234 threads the bilayer; it reads VLFQVFTTLGIMLAAMLGLIL. Topologically, residues 235–249 are extracellular; sequence DKTGASKEEANMAGR. A helical transmembrane segment spans residues 250-270; that stretch reads LHVFSAVPLGLSVAMFLVGMF. Topologically, residues 271–299 are cytoplasmic; that stretch reads LRESTATFAQDDDGKADGGMDPNEYGWGQ. The chain crosses the membrane as a helical span at residues 300–320; the sequence is MLWPLFMGAVTAGTLQLTGIN. At 321–338 the chain is on the extracellular side; that stretch reads AVMNYAPKITENLGMDPS. A helical membrane pass occupies residues 339 to 359; that stretch reads LGNFLVMAWNFVTSLVAIPLA. Residues 360 to 372 lie on the Cytoplasmic side of the membrane; it reads SRFTMRQMFITCS. The chain crosses the membrane as a helical span at residues 373 to 393; it reads FVASCMCLFLCGIPVFPGVAG. Topologically, residues 394 to 403 are extracellular; it reads KEVKNGVATT. The chain crosses the membrane as a helical span at residues 404–424; the sequence is GIALFIAAFEFGVGSCFFVLA. Over 425–436 the chain is Cytoplasmic; that stretch reads QDLFPPSFRPKG. Residues 437–457 traverse the membrane as a helical segment; the sequence is GSFVVMMQFIFNILINLLYPI. The Extracellular portion of the chain corresponds to 458 to 475; it reads TTEAISGGATGNQDKGQA. Residues 476 to 496 form a helical membrane-spanning segment; the sequence is VAFILFGLIGLICSVLQFFYL. Topologically, residues 497–527 are cytoplasmic; the sequence is YPYDANQDHENDHGGEPVEQKTYPVEASPRN. The segment covering 506–515 has biased composition (basic and acidic residues); it reads ENDHGGEPVE. Residues 506–527 form a disordered region; it reads ENDHGGEPVEQKTYPVEASPRN.

This sequence belongs to the major facilitator superfamily. Sugar transporter (TC 2.A.1.1) family.

The protein localises to the membrane. Its function is as follows. Facilitative glucose transporter. The chain is Glucose transporter 1B/1C/1D/1F/2B (THT1B) from Trypanosoma brucei brucei.